A 207-amino-acid polypeptide reads, in one-letter code: Guanylate kinase (207 aa).

Residues 4–184 (GTLYIVSAPS…ALSDLKTIIR (181 aa)) enclose the Guanylate kinase-like domain. 11–18 (APSGAGKS) lines the ATP pocket.

This sequence belongs to the guanylate kinase family.

The protein localises to the cytoplasm. The catalysed reaction is GMP + ATP = GDP + ADP. Functionally, essential for recycling GMP and indirectly, cGMP. The sequence is that of Guanylate kinase (gmk) from Salmonella typhimurium (strain LT2 / SGSC1412 / ATCC 700720).